The following is a 154-amino-acid chain: Small ribosomal subunit protein uS15 (154 aa).

The interval 1–23 is disordered; it reads MNKKRDKGQSHSTRPARAGPPRW.

This sequence belongs to the universal ribosomal protein uS15 family. In terms of assembly, part of the 30S ribosomal subunit.

The sequence is that of Small ribosomal subunit protein uS15 from Staphylothermus marinus (strain ATCC 43588 / DSM 3639 / JCM 9404 / F1).